We begin with the raw amino-acid sequence, 739 residues long: Exocyst complex component 3-like protein (739 aa).

The segment at 1–370 (MDSAARDKTQ…DVSDLEPLLT (370 aa)) is mediates interaction with EXOC2, EXOC4 and EXOC5.

It belongs to the SEC6 family. In terms of assembly, interacts with EXOC2, EXOC4 and EXOC5; may be part of the exocyst.

Its subcellular location is the cytoplasmic vesicle. The protein resides in the secretory vesicle. As part of the exocyst, may play a role in regulated exocytosis of insulin granules. The chain is Exocyst complex component 3-like protein (EXOC3L1) from Bos taurus (Bovine).